A 203-amino-acid chain; its full sequence is MGKKINPILFRLKKNTVYHSLWYTFKKNFCYYLKCDILIREIIRRNFLFINLSYIDIIISNKLTINLYINNVDQFNIIENYLDVFVFQISKILKKNVILNFVFNHVLNAKNIAYNVVNQILNKNSIKKIIKEELLKNRKNFGCKIQISGRLEGVDIARKEWSLIGRIPLHTIKYNLEYYQCETLTQYGILGVKIWLFKKNNEK.

This sequence belongs to the universal ribosomal protein uS3 family. In terms of assembly, part of the 30S ribosomal subunit. Forms a tight complex with proteins S10 and S14.

Functionally, binds the lower part of the 30S subunit head. Binds mRNA in the 70S ribosome, positioning it for translation. The protein is Small ribosomal subunit protein uS3 of Carsonella ruddii (strain PV).